Reading from the N-terminus, the 1462-residue chain is Trifunctional nucleotide phosphoesterase protein YfkN (1462 aa).

The first 35 residues, 1–35 (MRIQKRRTHVENILRILLPPIMILSLILPTPPIHA), serve as a signal peptide directing secretion. The tract at residues 36–623 (EESAAPQVHL…GTNLTFESSL (588 aa)) is 2',3'-cyclic nucleotide 2'-phosphodiesterase/3'-nucleotidase. 7 residues coordinate a divalent metal cation: Asp52, His54, Asp97, Asn141, His249, His282, and His284. Residues Tyr458 and 561–567 (YRASGGG) each bind a ribonucleoside 3'-phosphate. A 5'-nucleotidase region spans residues 624–1427 (LAKPFADKAD…GPAGGLLPDT (804 aa)). A divalent metal cation contacts are provided by Asp676, His678, Asp708, Asn740, His872, His895, and His897. Residues Phe1047 and 1127 to 1133 (FVGAGGD) contribute to the a ribonucleoside 5'-phosphate site. Residues 1350–1422 (ILNSGSNNKP…GSGTDGPAGG (73 aa)) are disordered. The segment covering 1405–1421 (GSGGNGSGGSGTDGPAG) has biased composition (gly residues). Residues 1424–1428 (LPDTA) carry the LPXTG sorting signal motif. Thr1427 carries the post-translational modification Pentaglycyl murein peptidoglycan amidated threonine. The propeptide at 1428-1462 (ATSMYSILLAGFLISALGTAMYLHQRRKQNRANQA) is removed by sortase.

The protein belongs to the 5'-nucleotidase family. A divalent metal cation serves as cofactor.

It is found in the secreted. The protein localises to the cell wall. The catalysed reaction is a nucleoside 2',3'-cyclic phosphate + H2O = a nucleoside 3'-phosphate + H(+). The enzyme catalyses a ribonucleoside 3'-phosphate + H2O = a ribonucleoside + phosphate. It carries out the reaction a ribonucleoside 5'-phosphate + H2O = a ribonucleoside + phosphate. Catalyzes the release of inorganic phosphate from 2',3'-cyclic nucleotides through consecutive 2',3'-phosphodiesterase and 3'- (or 2') nucleotidase activities. Also possesses a 5'-nucleotidase activity. Does not catalyze the release of inorganic phosphate from 3',5'-cyclic nucleotides. Probably plays a role in the cellular reprocessing of nucleotides present in the medium, under conditions of phosphate shortage. The sequence is that of Trifunctional nucleotide phosphoesterase protein YfkN (yfkN) from Bacillus subtilis (strain 168).